A 1304-amino-acid chain; its full sequence is MLDVNYFDELRIGLATADDIRQWSHGEVKKPETINYRTLRPEKDGLFCERIFGPTRDWECYCGKYKRVRFKGIICERCGVEVTRSKVRRERMGHIELAAPVTHIWYFKGVPSRLGYLLDLAPKDLEKVIYFAAYMITWVDEEARHRDLPSLEAQISVEKQEIEKRMNVELEERARKLEEDLAALEAEGAKADAKRKVREAAEREMRQIRERAQKEIDRIDEVFTRFKNLKVQDLEGDEVLYRELRDRFGQYFRGGMGAQAIKERLESFNLEAEAEALREQIRNGRGQKKARALKRLKVISAFLNTRNSPMGMVLDCIPVIPPDLRPMVQLDGGRFATSDLNDLYRRVINRNNRLKRLLDLGAPEIIVNNEKRMLQEAVDALFDNGRRGRPVTGPGNRPLKSLSDMLKGKQGRFRQNLLGKRVDYSGRSVIVVGPQLKLHQCGLPKVMALELFKPFVMKRLVDLNHAQNIKSAERMVERATSGLSRYAMVWDVLEEVIKEHPVLLNRAPTLHRLGIQAFEPQLVEGKAIQIHPLVCAAFNADFDGDQMAVHLPLSAEAQAEARILMLSSNNILKPADGRPVTMPSQDMVFGIYYLTTIKPGATGEGRVFSSDAEAIMARDLGELDIQAKIKVRLKDVVAVDDGTGSWTPPDGWQPGDPLLVETTLGRILFNEALPPDYRFINYELTKKDLSTIVNDLAERYPKVMVAACLDEMKTLGFHWATRAGVTISISDVVMPPRKQEILEAYEAKAEKVQRQYERGLITDDERRQELIEIWTQATADVAREMEANFPKDNPVFMMVNSGARGNMMQVRQIAGMRGLVANPKGEIIPRPIKSNFREGLSVLEYFISTHGARKGLADTALRTADSGYLTRRLVDVSQDVIVREEDCGTERAISMRIGVKGPDGTLTRLPTVETSVYARTLAEDVIVDGKVLAAKGSDIGDLTITELLAHGVEQVRVRSVLTCESKLGVCAACYGRSLASGKLVDVGEAVGIIAAQSIGEPGTQLTMRTFHTGGVAGEDITHGLPRVVELFEARTPKGVAPISEVTGRVKIEETEKARKIIITPDDGSEEVSYQVSKRARLRVAEGEHVEVGTQLVEGTVNPHEVLRILGPRAVQVHLVQEVQEVYRSQGVPIHDKHIEIIVRQMLKRVNILESGDTEFLPGELVERPKFEEENRRVVAEGGTPATARPVLMGITKASLATESWLSAASFQETTRVLTDAAINAKSDPLLGLKENVIIGKLIPAGTGMPRYRNIRVEPTEEARAAVYSMSGYDTGSYASGYGQFGTGSGQAVPLDDYDYGSYDR.

The Zn(2+) site is built by Cys-60, Cys-62, Cys-75, and Cys-78. The Mg(2+) site is built by Asp-541, Asp-543, and Asp-545. Positions 887, 963, 970, and 973 each coordinate Zn(2+).

It belongs to the RNA polymerase beta' chain family. The RNAP catalytic core consists of 2 alpha, 1 beta, 1 beta' and 1 omega subunit. When a sigma factor is associated with the core the holoenzyme is formed, which can initiate transcription. Requires Mg(2+) as cofactor. It depends on Zn(2+) as a cofactor.

It carries out the reaction RNA(n) + a ribonucleoside 5'-triphosphate = RNA(n+1) + diphosphate. Its function is as follows. DNA-dependent RNA polymerase catalyzes the transcription of DNA into RNA using the four ribonucleoside triphosphates as substrates. In Acidothermus cellulolyticus (strain ATCC 43068 / DSM 8971 / 11B), this protein is DNA-directed RNA polymerase subunit beta'.